We begin with the raw amino-acid sequence, 289 residues long: ATP synthase gamma chain (289 aa).

Belongs to the ATPase gamma chain family. As to quaternary structure, F-type ATPases have 2 components, CF(1) - the catalytic core - and CF(0) - the membrane proton channel. CF(1) has five subunits: alpha(3), beta(3), gamma(1), delta(1), epsilon(1). CF(0) has three main subunits: a, b and c.

The protein localises to the cell inner membrane. In terms of biological role, produces ATP from ADP in the presence of a proton gradient across the membrane. The gamma chain is believed to be important in regulating ATPase activity and the flow of protons through the CF(0) complex. This Cereibacter sphaeroides (strain ATCC 17025 / ATH 2.4.3) (Rhodobacter sphaeroides) protein is ATP synthase gamma chain.